Reading from the N-terminus, the 281-residue chain is Penicillin-insensitive murein endopeptidase (281 aa).

The signal sequence occupies residues 1–24; it reads MKQGLIGVLALALGATLLSSAVWA. Disulfide bonds link Cys-49–Cys-270, Cys-192–Cys-240, and Cys-221–Cys-228. Zn(2+) is bound by residues His-115, His-118, Asp-125, and His-216. Residues 230–271 form a disordered region; sequence EQSEPPIGDGCGAELTSWFQPKQPSSEAPEKTTPPPLPPSCQ. The segment covering 246–255 has biased composition (polar residues); sequence SWFQPKQPSS.

It belongs to the peptidase M74 family. Dimer. Zn(2+) is required as a cofactor.

Its subcellular location is the periplasm. Murein endopeptidase that cleaves the D-alanyl-meso-2,6-diamino-pimelyl amide bond that connects peptidoglycan strands. Likely plays a role in the removal of murein from the sacculus. The protein is Penicillin-insensitive murein endopeptidase (mepA) of Pectobacterium atrosepticum (strain SCRI 1043 / ATCC BAA-672) (Erwinia carotovora subsp. atroseptica).